Reading from the N-terminus, the 354-residue chain is UDP-3-O-acylglucosamine N-acyltransferase (354 aa).

The active-site Proton acceptor is histidine 258.

The protein belongs to the transferase hexapeptide repeat family. LpxD subfamily. Homotrimer.

It carries out the reaction a UDP-3-O-[(3R)-3-hydroxyacyl]-alpha-D-glucosamine + a (3R)-hydroxyacyl-[ACP] = a UDP-2-N,3-O-bis[(3R)-3-hydroxyacyl]-alpha-D-glucosamine + holo-[ACP] + H(+). It functions in the pathway bacterial outer membrane biogenesis; LPS lipid A biosynthesis. In terms of biological role, catalyzes the N-acylation of UDP-3-O-acylglucosamine using 3-hydroxyacyl-ACP as the acyl donor. Is involved in the biosynthesis of lipid A, a phosphorylated glycolipid that anchors the lipopolysaccharide to the outer membrane of the cell. The sequence is that of UDP-3-O-acylglucosamine N-acyltransferase from Sinorhizobium fredii (strain NBRC 101917 / NGR234).